The chain runs to 374 residues: N-acetyldiaminopimelate deacetylase (374 aa).

Asp68 is a catalytic residue. Catalysis depends on Glu127, which acts as the Proton acceptor.

The protein belongs to the peptidase M20A family. N-acetyldiaminopimelate deacetylase subfamily.

The enzyme catalyses N-acetyl-(2S,6S)-2,6-diaminopimelate + H2O = (2S,6S)-2,6-diaminopimelate + acetate. The protein operates within amino-acid biosynthesis; L-lysine biosynthesis via DAP pathway; LL-2,6-diaminopimelate from (S)-tetrahydrodipicolinate (acetylase route): step 3/3. In terms of biological role, catalyzes the conversion of N-acetyl-diaminopimelate to diaminopimelate and acetate. The polypeptide is N-acetyldiaminopimelate deacetylase (Shouchella clausii (strain KSM-K16) (Alkalihalobacillus clausii)).